An 81-amino-acid chain; its full sequence is Polcalcin Syr v 3 (81 aa).

EF-hand domains are found at residues 3–38 and 41–73; these read EEVA…LGSV and EEIQ…NSGL. The Ca(2+) site is built by aspartate 16, asparagine 18, aspartate 20, lysine 22, glutamate 27, aspartate 51, aspartate 53, aspartate 55, and glutamate 62.

This chain is Polcalcin Syr v 3 (SYRV3), found in Syringa vulgaris (Common lilac).